A 541-amino-acid polypeptide reads, in one-letter code: Chaperonin GroEL 2 (541 aa).

Residues 29–32, 86–90, Gly413, and Asp492 contribute to the ATP site; these read TLGP and DGTTT.

Belongs to the chaperonin (HSP60) family. Forms a cylinder of 14 subunits composed of two heptameric rings stacked back-to-back. Interacts with the co-chaperonin GroES.

The protein localises to the cytoplasm. It catalyses the reaction ATP + H2O + a folded polypeptide = ADP + phosphate + an unfolded polypeptide.. In terms of biological role, together with its co-chaperonin GroES, plays an essential role in assisting protein folding. The GroEL-GroES system forms a nano-cage that allows encapsulation of the non-native substrate proteins and provides a physical environment optimized to promote and accelerate protein folding. The protein is Chaperonin GroEL 2 of Nocardia farcinica (strain IFM 10152).